Consider the following 270-residue polypeptide: LIM zinc-binding domain-containing Nebulette (270 aa).

The 61-residue stretch at 3-63 folds into the LIM zinc-binding domain; the sequence is PQCARCGKVV…NAHYPKQSFT (61 aa). The Nebulin 1 repeat unit spans residues 61 to 95; it reads SFTTVADTPENLRLKQQSELQSQVKYKRDFEESKG. Omega-N-methylarginine is present on Arg96. A Nebulin 2 repeat occupies 97-131; it reads GFSIVTDTPELQRLKRTQEQISNVKYHEDFEKTKG. An Omega-N-methylarginine modification is found at Arg132. A Nebulin 3 repeat occupies 133–159; it reads GFTPVVDDPVTERVRKSTQVVSDAAYK. Position 135 is a phosphothreonine (Thr135). One can recognise an SH3 domain in the interval 210–270; sequence AHLRTYRAMY…LPANYIEFVN (61 aa). Ser230 is modified (phosphoserine).

It is found in the cytoplasm. Functionally, binds to actin and plays an important role in the assembly of the Z-disk. Isoform 2 might play a role in the assembly of focal adhesion. The chain is LIM zinc-binding domain-containing Nebulette (Nebl) from Mus musculus (Mouse).